A 156-amino-acid chain; its full sequence is tRNA (cytidine(34)-2'-O)-methyltransferase (156 aa).

S-adenosyl-L-methionine-binding residues include Gly-100, Ile-122, and Ser-130.

It belongs to the class IV-like SAM-binding methyltransferase superfamily. RNA methyltransferase TrmH family. TrmL subfamily. Homodimer.

Its subcellular location is the cytoplasm. The catalysed reaction is cytidine(34) in tRNA + S-adenosyl-L-methionine = 2'-O-methylcytidine(34) in tRNA + S-adenosyl-L-homocysteine + H(+). The enzyme catalyses 5-carboxymethylaminomethyluridine(34) in tRNA(Leu) + S-adenosyl-L-methionine = 5-carboxymethylaminomethyl-2'-O-methyluridine(34) in tRNA(Leu) + S-adenosyl-L-homocysteine + H(+). Functionally, methylates the ribose at the nucleotide 34 wobble position in the two leucyl isoacceptors tRNA(Leu)(CmAA) and tRNA(Leu)(cmnm5UmAA). Catalyzes the methyl transfer from S-adenosyl-L-methionine to the 2'-OH of the wobble nucleotide. The protein is tRNA (cytidine(34)-2'-O)-methyltransferase of Aeromonas hydrophila subsp. hydrophila (strain ATCC 7966 / DSM 30187 / BCRC 13018 / CCUG 14551 / JCM 1027 / KCTC 2358 / NCIMB 9240 / NCTC 8049).